A 73-amino-acid chain; its full sequence is Metallothionein (73 aa).

C15, C20, C26, C28, C32, C34, C39, C46, C48, C52, C54, C58, C64, C66, C70, and C72 together coordinate Cd(2+).

Belongs to the metallothionein superfamily. Type 2 family.

Its function is as follows. The metallothioneins are involved in the cellular sequestration of toxic metal ions. This is Metallothionein from Dreissena polymorpha (Zebra mussel).